We begin with the raw amino-acid sequence, 544 residues long: Putative cysteine ligase BshC (544 aa).

Positions 431-463 form a coiled coil; that stretch reads LNDTCRTIKEEHEKFIQELSRLDEKIYDFEEKN.

Belongs to the BshC family.

In terms of biological role, involved in bacillithiol (BSH) biosynthesis. May catalyze the last step of the pathway, the addition of cysteine to glucosamine malate (GlcN-Mal) to generate BSH. The chain is Putative cysteine ligase BshC from Natranaerobius thermophilus (strain ATCC BAA-1301 / DSM 18059 / JW/NM-WN-LF).